Here is a 623-residue protein sequence, read N- to C-terminus: DNA-directed RNA polymerase subunit beta' (623 aa).

4 residues coordinate Zn(2+): cysteine 70, cysteine 72, cysteine 85, and cysteine 88. Residues aspartate 466, aspartate 468, and aspartate 470 each coordinate Mg(2+).

The protein belongs to the RNA polymerase beta' chain family. RpoC1 subfamily. In plastids the minimal PEP RNA polymerase catalytic core is composed of four subunits: alpha, beta, beta', and beta''. When a (nuclear-encoded) sigma factor is associated with the core the holoenzyme is formed, which can initiate transcription. Requires Mg(2+) as cofactor. Zn(2+) serves as cofactor.

The protein localises to the plastid. It is found in the chloroplast. It carries out the reaction RNA(n) + a ribonucleoside 5'-triphosphate = RNA(n+1) + diphosphate. Its function is as follows. DNA-dependent RNA polymerase catalyzes the transcription of DNA into RNA using the four ribonucleoside triphosphates as substrates. In Guillardia theta (Cryptophyte), this protein is DNA-directed RNA polymerase subunit beta'.